The following is a 115-amino-acid chain: Chorion protein S15 (115 aa).

Residues M1–A18 form the signal peptide.

Belongs to the chorion protein S15/S18 family.

The protein localises to the secreted. Chorion membrane (egg shell) protein; plays a role in protecting the egg from the environment. This is Chorion protein S15 (Cp15) from Drosophila melanogaster (Fruit fly).